The following is a 549-amino-acid chain: 65-kDa microtubule-associated protein 9 (549 aa).

Coiled-coil stretches lie at residues 36–123 (IEIE…ERKI), 160–199 (SLRK…CSVL), and 459–492 (GNRL…HQGQ). The segment at 474-549 (EEKEQERRRK…SFSTPLSRHG (76 aa)) is disordered. A compositionally biased stretch (basic residues) spans 481–490 (RRKRDLKKHQ). Phosphoserine occurs at positions 501 and 546. Polar residues predominate over residues 514–549 (VSTNKRFVSSPHTPQTDSPHSAKSNQSFSTPLSRHG).

The protein belongs to the MAP65/ASE1 family. As to quaternary structure, forms dimer. Binds to microtubules (MT).

Its subcellular location is the nucleus. The protein resides in the cytoplasm. It is found in the cytoskeleton. The protein localises to the spindle pole. This Arabidopsis thaliana (Mouse-ear cress) protein is 65-kDa microtubule-associated protein 9 (MAP65-9).